Here is an 869-residue protein sequence, read N- to C-terminus: Dimethylglycine dehydrogenase, mitochondrial (869 aa).

The N-terminal 43 residues, 1 to 43, are a transit peptide targeting the mitochondrion; that stretch reads MLRPGALRLRGLALRGSPRRPSSAGLREGQESPASPPEWKDRA. The interval 14–39 is disordered; it reads LRGSPRRPSSAGLREGQESPASPPEW. FAD contacts are provided by residues 52–53, 73–74, and 80–88; these read CV, EK, and GSTWHAAGL. A Tele-8alpha-FAD histidine modification is found at histidine 84. Lysine 107 is modified (N6-acetyllysine). N6-acetyllysine; alternate is present on lysine 141. Lysine 141 carries the N6-succinyllysine; alternate modification. Lysine 161 is subject to N6-acetyllysine. Valine 212 serves as a coordination point for FAD. Residue lysine 216 is modified to N6-acetyllysine. Tryptophan 244 lines the FAD pocket. An N6-succinyllysine mark is found at lysine 310 and lysine 312. N6-acetyllysine is present on residues lysine 328 and lysine 353. 390–395 is an FAD binding site; it reads FGYGII. Residues lysine 427, lysine 469, and lysine 516 each carry the N6-acetyllysine; alternate modification. 3 positions are modified to N6-succinyllysine; alternate: lysine 427, lysine 469, and lysine 516. 573-575 contacts (6S)-5,6,7,8-tetrahydrofolate; sequence ELT. Lysine 648 is modified (N6-acetyllysine; alternate). Lysine 648 is modified (N6-succinyllysine; alternate). (6S)-5,6,7,8-tetrahydrofolate is bound by residues tyrosine 669, 676–678, and tyrosine 737; that span reads ELY. Position 757 is an N6-acetyllysine (lysine 757). The residue at position 786 (lysine 786) is an N6-acetyllysine; alternate. At lysine 786 the chain carries N6-succinyllysine; alternate. At lysine 788 the chain carries N6-succinyllysine.

This sequence belongs to the GcvT family. FAD serves as cofactor.

Its subcellular location is the mitochondrion. The enzyme catalyses (6S)-5,6,7,8-tetrahydrofolyl-(gamma-L-Glu)(n) + N,N-dimethylglycine + oxidized [electron-transfer flavoprotein] + H(+) = (6R)-5,10-methylenetetrahydrofolyl-(gamma-L-Glu)(n) + sarcosine + reduced [electron-transfer flavoprotein]. It functions in the pathway amine and polyamine degradation; betaine degradation; sarcosine from betaine: step 2/2. In terms of biological role, catalyzes the demethylation of N,N-dimethylglycine to sarcosine. Also has activity with sarcosine in vitro. This chain is Dimethylglycine dehydrogenase, mitochondrial (Dmgdh), found in Mus musculus (Mouse).